Reading from the N-terminus, the 242-residue chain is Phosphoribosylaminoimidazole-succinocarboxamide synthase (242 aa).

It belongs to the SAICAR synthetase family.

It carries out the reaction 5-amino-1-(5-phospho-D-ribosyl)imidazole-4-carboxylate + L-aspartate + ATP = (2S)-2-[5-amino-1-(5-phospho-beta-D-ribosyl)imidazole-4-carboxamido]succinate + ADP + phosphate + 2 H(+). It participates in purine metabolism; IMP biosynthesis via de novo pathway; 5-amino-1-(5-phospho-D-ribosyl)imidazole-4-carboxamide from 5-amino-1-(5-phospho-D-ribosyl)imidazole-4-carboxylate: step 1/2. This is Phosphoribosylaminoimidazole-succinocarboxamide synthase from Cyanothece sp. (strain PCC 7425 / ATCC 29141).